The sequence spans 595 residues: Tectonic-3 (595 aa).

A signal peptide spans 1–22 (MCTLQLHLLLLVVLMLSETARP). Residues 23–62 (QPSSTARAFPTSWGLEPVTPEVPTSAPPDSSESPTPWTLS) form a disordered region. At 23–575 (QPSSTARAFP…ALSRGASVQK (553 aa)) the chain is on the extracellular side. Over residues 49 to 62 (PPDSSESPTPWTLS) the composition is skewed to polar residues. N-linked (GlcNAc...) asparagine glycans are attached at residues Asn167 and Asn336. Residues 576–594 (DSLVLILCVLLLGLLNSQT) traverse the membrane as a helical segment. A topological domain (cytoplasmic) is located at residue Lys595.

The protein belongs to the tectonic family. Part of the tectonic-like complex (also named B9 complex).

It localises to the membrane. Its function is as follows. Part of the tectonic-like complex which is required for tissue-specific ciliogenesis and may regulate ciliary membrane composition. May be involved in apoptosis regulation. Necessary for signal transduction through the sonic hedgehog (Shh) signaling pathway. The chain is Tectonic-3 (Tctn3) from Mus musculus (Mouse).